The following is a 231-amino-acid chain: Large ribosomal subunit protein uL1 (231 aa).

This sequence belongs to the universal ribosomal protein uL1 family. As to quaternary structure, part of the 50S ribosomal subunit.

Binds directly to 23S rRNA. The L1 stalk is quite mobile in the ribosome, and is involved in E site tRNA release. In terms of biological role, protein L1 is also a translational repressor protein, it controls the translation of the L11 operon by binding to its mRNA. The sequence is that of Large ribosomal subunit protein uL1 from Francisella philomiragia subsp. philomiragia (strain ATCC 25017 / CCUG 19701 / FSC 153 / O#319-036).